A 283-amino-acid polypeptide reads, in one-letter code: Glutamate racemase (283 aa).

Substrate-binding positions include 7–8 (DS) and 39–40 (YG). The active-site Proton donor/acceptor is Cys70. 71–72 (NT) contacts substrate. Cys206 acts as the Proton donor/acceptor in catalysis. Residue 207 to 208 (TH) coordinates substrate.

Belongs to the aspartate/glutamate racemases family.

The enzyme catalyses L-glutamate = D-glutamate. Its pathway is cell wall biogenesis; peptidoglycan biosynthesis. Functionally, provides the (R)-glutamate required for cell wall biosynthesis. The chain is Glutamate racemase from Caulobacter sp. (strain K31).